We begin with the raw amino-acid sequence, 21 residues long: S-layer protein 2 (21 aa).

The protein resides in the secreted. It localises to the cell wall. The protein localises to the S-layer. Functionally, the S-layer is a paracrystalline mono-layered assembly of proteins which coat the surface of bacteria. The sequence is that of S-layer protein 2 from Bacillus thuringiensis subsp. konkukian.